Reading from the N-terminus, the 500-residue chain is MTDQYVLALDQGTTSSRAILFNRSGDIVSLAQKEFRQIYPQPGWVEHDPQEIWGGQVGVAAEAVAKAGIDGRSIAAIGITNQRETTIVWDRETGQPVYNAIVWQDRRTAEFCDELKARGLGELIRSKTGLLVDAYFSGSKIKWILDNVPGARDRAREGKLAFGTVDSWLIWNFTHGKVHVTDVSNASRTMLYNIHTLQWDAELLDIMGIPASMLPEVKSSSEVYGHTHAAHLGVEIPIAGVAGDQQAALFGQQCTTPGMVKNTYGTGCFMMLNTGDKPIESSNNLLTTIAWKVDGKVQYALEGSIFIGGAVVKWLRDGLGIIRHSADVGPLAQEVKNSDGVYLVPAFAGLGAPHWNASARGTIVGATLGTKAAHIARAALDSIAYQTRDVLKAMEADAGMSIAELRVDGGATVNELLMQFQSDILAVDVVRPKITETTALGAAYLAGLAVGYWKSVDDIQGQWQLDRRFQPAMAADEVLANVKGWQRAVNAAKVWADDQA.

Thr-13 lines the ADP pocket. Residues Thr-13, Thr-14, and Ser-15 each coordinate ATP. Position 13 (Thr-13) interacts with sn-glycerol 3-phosphate. Arg-17 serves as a coordination point for ADP. Positions 83, 84, 135, and 244 each coordinate sn-glycerol 3-phosphate. Residues Arg-83, Glu-84, Tyr-135, Asp-244, and Gln-245 each coordinate glycerol. Thr-266, Gly-309, Gly-410, and Asn-414 together coordinate ADP. Thr-266, Gly-309, and Gly-410 together coordinate ATP.

The protein belongs to the FGGY kinase family.

It catalyses the reaction glycerol + ATP = sn-glycerol 3-phosphate + ADP + H(+). The protein operates within polyol metabolism; glycerol degradation via glycerol kinase pathway; sn-glycerol 3-phosphate from glycerol: step 1/1. With respect to regulation, inhibited by fructose 1,6-bisphosphate (FBP). Key enzyme in the regulation of glycerol uptake and metabolism. Catalyzes the phosphorylation of glycerol to yield sn-glycerol 3-phosphate. This is Glycerol kinase from Chromobacterium violaceum (strain ATCC 12472 / DSM 30191 / JCM 1249 / CCUG 213 / NBRC 12614 / NCIMB 9131 / NCTC 9757 / MK).